The chain runs to 183 residues: MLILASSSISRANLLKTAKIDFRQVSFDYDENLNKNISPFLYVQKIVLEKERQFLSTLGKDFQNQNLLFADSIVCIDEKILTKAKDKKEAYEMLALQNGKYASILSAFLLVKPEKRVFSLSKTTLYFKNFDENALRDYVENDLYKGKAGCIMCEGFHQNFITQQVGNLSTALGLDIQTLKAYL.

Aspartate 71 functions as the Proton acceptor in the catalytic mechanism.

Belongs to the Maf family. A divalent metal cation serves as cofactor.

It is found in the cytoplasm. It catalyses the reaction a ribonucleoside 5'-triphosphate + H2O = a ribonucleoside 5'-phosphate + diphosphate + H(+). It carries out the reaction a 2'-deoxyribonucleoside 5'-triphosphate + H2O = a 2'-deoxyribonucleoside 5'-phosphate + diphosphate + H(+). Its function is as follows. Nucleoside triphosphate pyrophosphatase. May have a dual role in cell division arrest and in preventing the incorporation of modified nucleotides into cellular nucleic acids. The protein is Nucleoside triphosphate pyrophosphatase of Campylobacter jejuni subsp. jejuni serotype O:2 (strain ATCC 700819 / NCTC 11168).